The sequence spans 436 residues: Xylose isomerase (436 aa).

Active-site residues include H100 and D103. Mg(2+) contacts are provided by E231, E267, H270, D295, D306, D308, and D338.

This sequence belongs to the xylose isomerase family. As to quaternary structure, homotetramer. Requires Mg(2+) as cofactor.

It is found in the cytoplasm. It carries out the reaction alpha-D-xylose = alpha-D-xylulofuranose. In Rhizobium etli (strain CIAT 652), this protein is Xylose isomerase.